Reading from the N-terminus, the 455-residue chain is Retinoic acid receptor beta (455 aa).

Residues 1–87 (MTTSGHACPV…PLPPPRVYKP (87 aa)) form a modulating region. A disordered region spans residues 47–78 (HPPPSGCSTPSPATIETQSTSSEELVPSPPSP). Positions 53 to 66 (CSTPSPATIETQST) are enriched in polar residues. Phosphoserine is present on Ser77. 2 consecutive NR C4-type zinc fingers follow at residues 88–108 (CFVC…CEGC) and 124–148 (CHRD…LQKC). Residues 88-153 (CFVCQDKSSG…RLQKCFEVGM (66 aa)) constitute a DNA-binding region (nuclear receptor). A hinge region spans residues 154–182 (SKESVRNDRNKKKKETSKQECTESYEMTA). The 235-residue stretch at 183-417 (ELDDLTEKIR…PLIQEMLENS (235 aa)) folds into the NR LBD domain. Positions 415-455 (ENSEGHEPLTPSSSGNTAEHSPSISPSSVENSGVSQSPLVQ) are disordered. Over residues 424–434 (TPSSSGNTAEH) the composition is skewed to polar residues. A compositionally biased stretch (low complexity) spans 435-455 (SPSISPSSVENSGVSQSPLVQ).

This sequence belongs to the nuclear hormone receptor family. NR1 subfamily. Homodimer. Heterodimer; with a RXR molecule. Binds DNA preferentially as a RAR/RXR heterodimer. Heterodimerizes (via NR LBD) with RXRA. Interacts weakly with NCOR2. In terms of tissue distribution, expressed in aortic endothelial cells (at protein level).

Its subcellular location is the nucleus. It localises to the cytoplasm. Functionally, receptor for retinoic acid. Retinoic acid receptors bind as heterodimers to their target response elements in response to their ligands, all-trans or 9-cis retinoic acid, and regulate gene expression in various biological processes. The RXR/RAR heterodimers bind to the retinoic acid response elements (RARE) composed of tandem 5'-AGGTCA-3' sites known as DR1-DR5. In the absence or presence of hormone ligand, acts mainly as an activator of gene expression due to weak binding to corepressors. The RXRA/RARB heterodimer can act as a repressor on the DR1 element and as an activator on the DR5 element. In concert with RARG, required for skeletal growth, matrix homeostasis and growth plate function. In Homo sapiens (Human), this protein is Retinoic acid receptor beta (RARB).